The chain runs to 197 residues: Small ribosomal subunit protein uS4 (197 aa).

Residues 87–147 (SRIDNVIFRL…ESKKNTQRMK (61 aa)) form the S4 RNA-binding domain.

This sequence belongs to the universal ribosomal protein uS4 family. Part of the 30S ribosomal subunit. Contacts protein S5. The interaction surface between S4 and S5 is involved in control of translational fidelity.

One of the primary rRNA binding proteins, it binds directly to 16S rRNA where it nucleates assembly of the body of the 30S subunit. In terms of biological role, with S5 and S12 plays an important role in translational accuracy. This is Small ribosomal subunit protein uS4 from Agathobacter rectalis (strain ATCC 33656 / DSM 3377 / JCM 17463 / KCTC 5835 / VPI 0990) (Eubacterium rectale).